The following is a 156-amino-acid chain: ATP synthase subunit b (156 aa).

Residues 7–27 (IFFQMLVFFVLGWFTMKFVWP) traverse the membrane as a helical segment.

This sequence belongs to the ATPase B chain family. F-type ATPases have 2 components, F(1) - the catalytic core - and F(0) - the membrane proton channel. F(1) has five subunits: alpha(3), beta(3), gamma(1), delta(1), epsilon(1). F(0) has three main subunits: a(1), b(2) and c(10-14). The alpha and beta chains form an alternating ring which encloses part of the gamma chain. F(1) is attached to F(0) by a central stalk formed by the gamma and epsilon chains, while a peripheral stalk is formed by the delta and b chains.

It is found in the cell inner membrane. In terms of biological role, f(1)F(0) ATP synthase produces ATP from ADP in the presence of a proton or sodium gradient. F-type ATPases consist of two structural domains, F(1) containing the extramembraneous catalytic core and F(0) containing the membrane proton channel, linked together by a central stalk and a peripheral stalk. During catalysis, ATP synthesis in the catalytic domain of F(1) is coupled via a rotary mechanism of the central stalk subunits to proton translocation. Component of the F(0) channel, it forms part of the peripheral stalk, linking F(1) to F(0). This chain is ATP synthase subunit b, found in Bordetella petrii (strain ATCC BAA-461 / DSM 12804 / CCUG 43448).